The following is a 413-amino-acid chain: Acyltransferase mokF (413 aa).

Arg93 lines the monacolin J pocket. Ser96 (acyl-ester intermediate) is an active-site residue. Residues Arg193, Tyr208, and Tyr278 each contribute to the monacolin J site. A 2-methylbutanoate-binding site is contributed by Gly386.

The protein belongs to the class-A beta-lactamase family.

It carries out the reaction monacolin J carboxylate + (S)-2-methylbutanoyl-[2-methylbutanoate polyketide synthase] = lovastatin carboxylate + holo-[2-methylbutanoate polyketide synthase]. It functions in the pathway polyketide biosynthesis; lovastatin biosynthesis. Functionally, acyltransferase; part of the gene cluster that mediates the biosynthesis of monakolin K, also known as lovastatin, and which acts as a potent competitive inhibitor of HMG-CoA reductase. Monakolin K biosynthesis is performed in two stages. The first stage is catalyzed by the nonaketide synthase mokA, which belongs to type I polyketide synthases and catalyzes the iterative nine-step formation of the polyketide. This PKS stage is completed by the action of dehydrogenase mokE, which catalyzes the NADPH-dependent reduction of the unsaturated tetra-, penta- and heptaketide intermediates that arise during the mokA-mediated biosynthesis of the nonaketide chain and leads to dihydromonacolin L. Covalently bound dihydromonacolin L is released from mokA by the mokD esterase. Conversion of dihydromonacolin L into monacolin L and then monacolin J is subsequently performed with the participation of molecular oxygen and P450 monoogygenase mokC. Finally, mokF performs the conversion of monacoline J to monacoline K through the addition of the side-chain diketide moiety (2R)-2-methylbutanoate produced by the diketide synthase mokB. This is Acyltransferase mokF from Monascus pilosus (Red mold).